A 640-amino-acid polypeptide reads, in one-letter code: tRNA-dihydrouridine(47) synthase [NAD(P)(+)]-like (640 aa).

A compositionally biased stretch (polar residues) spans 1–11; sequence MAESEGSNTEN. Disordered regions lie at residues 1–23 and 43–123; these read MAES…ENLD and FIDA…HSQF. Positions 43–57 are enriched in basic and acidic residues; sequence FIDADGKDVTEKETC. Over residues 58 to 72 the composition is skewed to polar residues; sequence SELSLNDAENTTRTE. The span at 77–86 shows a compositional bias: basic and acidic residues; the sequence is PEAKRIKLDD. Over residues 104–120 the composition is skewed to basic residues; sequence EKKRARGQNKSRPHMKH. 2 consecutive C3H1-type zinc fingers follow at residues 123 to 153 and 161 to 191; these read FEEN…HDVA and EDIR…HLGE. FMN is bound by residues 301 to 303 and glutamine 355; that span reads PLT. The active-site Proton donor is the cysteine 386. FMN contacts are provided by residues lysine 425, histidine 455, 487–489, and 510–511; these read NGD and AR.

It belongs to the Dus family. Dus3 subfamily. FMN serves as cofactor.

It catalyses the reaction 5,6-dihydrouridine(47) in tRNA + NAD(+) = uridine(47) in tRNA + NADH + H(+). The enzyme catalyses 5,6-dihydrouridine(47) in tRNA + NADP(+) = uridine(47) in tRNA + NADPH + H(+). The catalysed reaction is a 5,6-dihydrouridine in mRNA + NAD(+) = a uridine in mRNA + NADH + H(+). It carries out the reaction a 5,6-dihydrouridine in mRNA + NADP(+) = a uridine in mRNA + NADPH + H(+). Functionally, catalyzes the synthesis of dihydrouridine, a modified base, in various RNAs, such as tRNAs, mRNAs and some long non-coding RNAs (lncRNAs). Mainly modifies the uridine in position 47 (U47) in the D-loop of most cytoplasmic tRNAs. Also able to mediate the formation of dihydrouridine in some mRNAs, thereby regulating their translation. In Xenopus laevis (African clawed frog), this protein is tRNA-dihydrouridine(47) synthase [NAD(P)(+)]-like (dus3l).